Here is a 187-residue protein sequence, read N- to C-terminus: dTTP/UTP pyrophosphatase (187 aa).

D65 functions as the Proton acceptor in the catalytic mechanism.

This sequence belongs to the Maf family. YhdE subfamily. It depends on a divalent metal cation as a cofactor.

It localises to the cytoplasm. It catalyses the reaction dTTP + H2O = dTMP + diphosphate + H(+). It carries out the reaction UTP + H2O = UMP + diphosphate + H(+). Functionally, nucleoside triphosphate pyrophosphatase that hydrolyzes dTTP and UTP. May have a dual role in cell division arrest and in preventing the incorporation of modified nucleotides into cellular nucleic acids. The chain is dTTP/UTP pyrophosphatase from Pyrococcus abyssi (strain GE5 / Orsay).